The chain runs to 97 residues: MTALTKADMADHLSELTSLNRREAKQMVELFFDEISQALIAGEHVKLSGFGNFELRDKRERPGRNPKTGEEIPISARRVVTFRAGQKFRQRVGTEQE.

This sequence belongs to the bacterial histone-like protein family. Heterodimer of an alpha and a beta chain.

This protein is one of the two subunits of integration host factor, a specific DNA-binding protein that functions in genetic recombination as well as in transcriptional and translational control. This is Integration host factor subunit alpha from Acinetobacter baylyi (strain ATCC 33305 / BD413 / ADP1).